Consider the following 113-residue polypeptide: Stigma/stylar cysteine-rich adhesin (113 aa).

Positions 1–22 are cleaved as a signal peptide; it reads MARSSAVCFLLLLAFLIGTASA. 4 cysteine pairs are disulfide-bonded: cysteine 25–cysteine 72, cysteine 35–cysteine 49, cysteine 50–cysteine 95, and cysteine 70–cysteine 109.

It belongs to the plant LTP family. In terms of tissue distribution, highly expressed in style and stigma, abundant in young leaves and petals, and low expression in young anthers at pollen mother cell stage with an active tapetum. Not expressed in mature leaves or in pollen grains or tubes. Found in the stylar transmitting tract epidermis and in the stylar extracellular matrix.

In terms of biological role, acts as an adhesive agent between the pollen tube wall and the stylar transmitting tract epidermis. Binds a stylar pectin in a pH-dependent manner. Enhances activity of chemocyanin, a diffusible chemotropic factor. This Lilium longiflorum (Trumpet lily) protein is Stigma/stylar cysteine-rich adhesin (SCA).